A 149-amino-acid chain; its full sequence is Transcription antitermination protein NusB (149 aa).

This sequence belongs to the NusB family.

Functionally, involved in transcription antitermination. Required for transcription of ribosomal RNA (rRNA) genes. Binds specifically to the boxA antiterminator sequence of the ribosomal RNA (rrn) operons. The sequence is that of Transcription antitermination protein NusB from Acinetobacter baumannii (strain AB307-0294).